A 291-amino-acid chain; its full sequence is Taste receptor type 2 member 16 (291 aa).

A topological domain (extracellular) is located at residue methionine 1. A helical transmembrane segment spans residues 2 to 22; sequence IPIQLTVFFMIIYVLESLTII. Over 23 to 41 the chain is Cytoplasmic; the sequence is VQSSLIVAVLGREWLQVRR. The chain crosses the membrane as a helical span at residues 42 to 62; sequence LMPVDMILISLGISRFCLQWA. The Extracellular segment spans residues 63–84; sequence SMLNNFCSYFNLNYVLCNLTIT. Asparagine 80 carries an N-linked (GlcNAc...) asparagine glycan. The chain crosses the membrane as a helical span at residues 85–105; that stretch reads WEFFNILTFWLNSLLTVFYCI. Topologically, residues 106–125 are cytoplasmic; it reads KASSFTHHIFLWLRWRILRL. A helical membrane pass occupies residues 126–146; sequence FPWILLGSLMITCVTIIPSAI. At 147-182 the chain is on the extracellular side; that stretch reads GNYIQIQLLTMEHLPRNSTVTDKLEKFHQYQFQAHT. N-linked (GlcNAc...) asparagine glycosylation occurs at asparagine 163. The chain crosses the membrane as a helical span at residues 183–203; that stretch reads VALVIPFILFLASTILLMASL. Residues 204–228 are Cytoplasmic-facing; sequence TKQIQHHSTGHCNPSMKAHFTALRS. The helical transmembrane segment at 229–249 threads the bilayer; that stretch reads LAVLFIVFTSYFLTILITIIG. Over 250-257 the chain is Extracellular; the sequence is TLFDKRCW. Residues 258–278 form a helical membrane-spanning segment; sequence LWVWEAFVYAFILMHSTSLML. The Cytoplasmic segment spans residues 279-291; that stretch reads SSPTLKRILKGKC.

This sequence belongs to the G-protein coupled receptor T2R family. Interacts with RTP3 and RTP4.

Its subcellular location is the cell membrane. In terms of biological role, receptor that may play a role in the perception of bitterness and is gustducin-linked. May play a role in sensing the chemical composition of the gastrointestinal content. The activity of this receptor may stimulate alpha gustducin, mediate PLC-beta-2 activation and lead to the gating of TRPM5. In Pan paniscus (Pygmy chimpanzee), this protein is Taste receptor type 2 member 16 (TAS2R16).